A 441-amino-acid chain; its full sequence is Dolichyl-diphosphooligosaccharide--protein glycosyltransferase 48 kDa subunit (441 aa).

A signal peptide spans 1–28 (MATALSGGFSKNALFILSAALMLQAVLG). The Lumenal portion of the chain corresponds to 29 to 410 (DGKTLVLLDN…TQYERFIPSA (382 aa)). Residues 411 to 431 (FPYYASAFSMMAGLFVFSVVF) form a helical membrane-spanning segment. Residues 432–441 (LHMREKEKSD) lie on the Cytoplasmic side of the membrane.

Belongs to the DDOST 48 kDa subunit family. As to quaternary structure, component of the oligosaccharyltransferase (OST) complex.

The protein resides in the endoplasmic reticulum membrane. The protein operates within protein modification; protein glycosylation. Subunit of the oligosaccharyl transferase (OST) complex that catalyzes the initial transfer of a defined glycan (Glc(3)Man(9)GlcNAc(2) in eukaryotes) from the lipid carrier dolichol-pyrophosphate to an asparagine residue within an Asn-X-Ser/Thr consensus motif in nascent polypeptide chains, the first step in protein N-glycosylation. N-glycosylation occurs cotranslationally and the complex associates with the Sec61 complex at the channel-forming translocon complex that mediates protein translocation across the endoplasmic reticulum (ER). All subunits are required for a maximal enzyme activity. Required for the assembly of both SST3A- and SS3B-containing OST complexes. In Danio rerio (Zebrafish), this protein is Dolichyl-diphosphooligosaccharide--protein glycosyltransferase 48 kDa subunit.